Consider the following 284-residue polypeptide: Pantothenate synthetase (284 aa).

30–37 (MGNLHEGH) contributes to the ATP binding site. The active-site Proton donor is the H37. (R)-pantoate is bound at residue Q61. Q61 is a binding site for beta-alanine. 149-152 (GEKD) is a binding site for ATP. Residue Q155 coordinates (R)-pantoate. ATP-binding positions include V178 and 186-189 (LSSR).

This sequence belongs to the pantothenate synthetase family. In terms of assembly, homodimer.

Its subcellular location is the cytoplasm. The catalysed reaction is (R)-pantoate + beta-alanine + ATP = (R)-pantothenate + AMP + diphosphate + H(+). It functions in the pathway cofactor biosynthesis; (R)-pantothenate biosynthesis; (R)-pantothenate from (R)-pantoate and beta-alanine: step 1/1. Its function is as follows. Catalyzes the condensation of pantoate with beta-alanine in an ATP-dependent reaction via a pantoyl-adenylate intermediate. The polypeptide is Pantothenate synthetase (Sodalis glossinidius (strain morsitans)).